The chain runs to 142 residues: Membrane protein YneK (142 aa).

The chain crosses the membrane as a helical span at residues 6-26 (FLWFILFWVIMMVVLLSIGGF).

In terms of assembly, interacts with the N-terminal D1 domain of dynamin-like protein DynA.

Its subcellular location is the cell membrane. The polypeptide is Membrane protein YneK (yneK) (Bacillus subtilis (strain 168)).